A 261-amino-acid chain; its full sequence is Cytochrome c oxidase subunit 3 (261 aa).

The Mitochondrial matrix segment spans residues 1–15; sequence MAHQAHSYHMVDPSP. The helical transmembrane segment at 16–34 threads the bilayer; it reads WPIFGATAALLTTSGLIMW. The Mitochondrial intermembrane segment spans residues 35-40; sequence FHYNSL. The helical transmembrane segment at 41 to 66 threads the bilayer; the sequence is YLLTLGLLSMFLVMIQWWRDIVREST. Topologically, residues 67–72 are mitochondrial matrix; it reads FQGHHT. Residues 73-105 form a helical membrane-spanning segment; the sequence is PTVQKGLRYGMILFITSEAFFFLGFFWAFFHSS. At 106-128 the chain is on the mitochondrial intermembrane side; it reads LAPTPELGAQWPPTGINPLNPLE. Residues 129 to 152 form a helical membrane-spanning segment; the sequence is VPLLNTAILLASGVTVTWAHHSIT. Residues 153-155 are Mitochondrial matrix-facing; sequence ESN. The chain crosses the membrane as a helical span at residues 156–183; sequence RKQAIHALSLTIILGFYFTALQAMEYHE. Residues 184–190 lie on the Mitochondrial intermembrane side of the membrane; sequence ASFSIAD. The chain crosses the membrane as a helical span at residues 191 to 223; it reads GVYGSTFFVATGFHGLHVIIGSSFLTVCLLRLI. Residues 224–232 are Mitochondrial matrix-facing; sequence KFHFTTNHH. Residues 233–256 traverse the membrane as a helical segment; that stretch reads FGFEAAAWYWHFVDVIWLFLYMSI. The Mitochondrial intermembrane portion of the chain corresponds to 257–261; the sequence is YWWGS.

Belongs to the cytochrome c oxidase subunit 3 family. In terms of assembly, component of the cytochrome c oxidase (complex IV, CIV), a multisubunit enzyme composed of 14 subunits. The complex is composed of a catalytic core of 3 subunits MT-CO1, MT-CO2 and MT-CO3, encoded in the mitochondrial DNA, and 11 supernumerary subunits COX4I, COX5A, COX5B, COX6A, COX6B, COX6C, COX7A, COX7B, COX7C, COX8 and NDUFA4, which are encoded in the nuclear genome. The complex exists as a monomer or a dimer and forms supercomplexes (SCs) in the inner mitochondrial membrane with NADH-ubiquinone oxidoreductase (complex I, CI) and ubiquinol-cytochrome c oxidoreductase (cytochrome b-c1 complex, complex III, CIII), resulting in different assemblies (supercomplex SCI(1)III(2)IV(1) and megacomplex MCI(2)III(2)IV(2)).

It is found in the mitochondrion inner membrane. The catalysed reaction is 4 Fe(II)-[cytochrome c] + O2 + 8 H(+)(in) = 4 Fe(III)-[cytochrome c] + 2 H2O + 4 H(+)(out). In terms of biological role, component of the cytochrome c oxidase, the last enzyme in the mitochondrial electron transport chain which drives oxidative phosphorylation. The respiratory chain contains 3 multisubunit complexes succinate dehydrogenase (complex II, CII), ubiquinol-cytochrome c oxidoreductase (cytochrome b-c1 complex, complex III, CIII) and cytochrome c oxidase (complex IV, CIV), that cooperate to transfer electrons derived from NADH and succinate to molecular oxygen, creating an electrochemical gradient over the inner membrane that drives transmembrane transport and the ATP synthase. Cytochrome c oxidase is the component of the respiratory chain that catalyzes the reduction of oxygen to water. Electrons originating from reduced cytochrome c in the intermembrane space (IMS) are transferred via the dinuclear copper A center (CU(A)) of subunit 2 and heme A of subunit 1 to the active site in subunit 1, a binuclear center (BNC) formed by heme A3 and copper B (CU(B)). The BNC reduces molecular oxygen to 2 water molecules using 4 electrons from cytochrome c in the IMS and 4 protons from the mitochondrial matrix. The chain is Cytochrome c oxidase subunit 3 (MT-CO3) from Struthio camelus (Common ostrich).